A 441-amino-acid polypeptide reads, in one-letter code: Cobyrinate a,c-diamide synthase (441 aa).

One can recognise a GATase cobBQ-type domain in the interval 243 to 434 (TVAVADDAAF…AHVHPESTAF (192 aa)). The active-site Nucleophile is the cysteine 323.

The protein belongs to the CobB/CbiA family. Mg(2+) serves as cofactor.

It catalyses the reaction cob(II)yrinate + 2 L-glutamine + 2 ATP + 2 H2O = cob(II)yrinate a,c diamide + 2 L-glutamate + 2 ADP + 2 phosphate + 2 H(+). Its pathway is cofactor biosynthesis; adenosylcobalamin biosynthesis; cob(II)yrinate a,c-diamide from sirohydrochlorin (anaerobic route): step 10/10. Functionally, catalyzes the ATP-dependent amidation of the two carboxylate groups at positions a and c of cobyrinate, using either L-glutamine or ammonia as the nitrogen source. The sequence is that of Cobyrinate a,c-diamide synthase from Halobacterium salinarum (strain ATCC 700922 / JCM 11081 / NRC-1) (Halobacterium halobium).